Here is a 968-residue protein sequence, read N- to C-terminus: RNA polymerase-associated protein RapA (968 aa).

Residues 163–332 (EVGRRYAPRV…FARLRLLDPD (170 aa)) form the Helicase ATP-binding domain. 176–183 (DEVGLGKT) is an ATP binding site. The DEAH box motif lies at 278-281 (DEAH). One can recognise a Helicase C-terminal domain in the interval 491–643 (RVDWLIAFLK…ELTCPSGHVL (153 aa)).

It belongs to the SNF2/RAD54 helicase family. RapA subfamily. Interacts with the RNAP. Has a higher affinity for the core RNAP than for the holoenzyme. Its ATPase activity is stimulated by binding to RNAP.

Its function is as follows. Transcription regulator that activates transcription by stimulating RNA polymerase (RNAP) recycling in case of stress conditions such as supercoiled DNA or high salt concentrations. Probably acts by releasing the RNAP, when it is trapped or immobilized on tightly supercoiled DNA. Does not activate transcription on linear DNA. Probably not involved in DNA repair. The chain is RNA polymerase-associated protein RapA from Shewanella sp. (strain W3-18-1).